A 357-amino-acid chain; its full sequence is Homoserine O-succinyltransferase (357 aa).

Cys146 acts as the Acyl-thioester intermediate in catalysis. 2 residues coordinate substrate: Lys167 and Ser196. His239 (proton acceptor) is an active-site residue. The active site involves Glu241. Residue Arg253 coordinates substrate.

Belongs to the MetA family.

It localises to the cytoplasm. It catalyses the reaction L-homoserine + succinyl-CoA = O-succinyl-L-homoserine + CoA. It participates in amino-acid biosynthesis; L-methionine biosynthesis via de novo pathway; O-succinyl-L-homoserine from L-homoserine: step 1/1. Functionally, transfers a succinyl group from succinyl-CoA to L-homoserine, forming succinyl-L-homoserine. The polypeptide is Homoserine O-succinyltransferase (Allochromatium vinosum (strain ATCC 17899 / DSM 180 / NBRC 103801 / NCIMB 10441 / D) (Chromatium vinosum)).